A 213-amino-acid polypeptide reads, in one-letter code: uncharacterized protein (213 aa).

The S-adenosyl-L-methionine site is built by G53, E74, and D97.

The protein belongs to the methyltransferase superfamily. YrrT family.

Functionally, could be a S-adenosyl-L-methionine-dependent methyltransferase. This is an uncharacterized protein from Bacillus subtilis (strain 168).